A 259-amino-acid chain; its full sequence is Oxaloacetate tautomerase FMP41, mitochondrial (259 aa).

Mg(2+) contacts are provided by Glu-87, Glu-89, and Asp-121.

It belongs to the FAH family. The cofactor is Mg(2+). It depends on Mn(2+) as a cofactor.

It localises to the mitochondrion. The enzyme catalyses oxaloacetate = enol-oxaloacetate. Tautomerase that converts enol-oxaloacetate, a strong inhibitor of succinate dehydrogenase, to the physiological keto form of oxaloacetate. This is Oxaloacetate tautomerase FMP41, mitochondrial from Saccharomyces cerevisiae (strain ATCC 204508 / S288c) (Baker's yeast).